We begin with the raw amino-acid sequence, 147 residues long: MWSLPPSRALSCAPLLLLFSFQFLVTYAWRFQEEEEWNDQKQIAVYLPPTLEFAVYTFNKQSKDWYAYKLVPVLASWKEQGYDKMTFSMNLQLGRTMCGKFEDDIDNCPFQESPELNNTCTCFFTIGIEPWRTRFDLWNKTCSGGHS.

A signal peptide spans 1-28 (MWSLPPSRALSCAPLLLLFSFQFLVTYA). A disulfide bridge links cysteine 98 with cysteine 108. N-linked (GlcNAc...) asparagine glycans are attached at residues asparagine 117 and asparagine 139. An intrachain disulfide couples cysteine 122 to cysteine 142.

This sequence belongs to the cystatin family.

The protein resides in the secreted. This is Putative cystatin-9-like protein CST9LP1 (CST9LP1) from Homo sapiens (Human).